The primary structure comprises 66 residues: Large ribosomal subunit protein uL29 (66 aa).

Belongs to the universal ribosomal protein uL29 family.

The chain is Large ribosomal subunit protein uL29 from Thermoplasma volcanium (strain ATCC 51530 / DSM 4299 / JCM 9571 / NBRC 15438 / GSS1).